Reading from the N-terminus, the 382-residue chain is Pyrimidine monooxygenase RutA (382 aa).

Residues 68-69, Asn134, Glu143, 159-160, and Ser209 each bind FMN; these read IK and RY.

Belongs to the NtaA/SnaA/DszA monooxygenase family. RutA subfamily.

It carries out the reaction uracil + FMNH2 + NADH + O2 = (Z)-3-ureidoacrylate + FMN + NAD(+) + H2O + H(+). The enzyme catalyses thymine + FMNH2 + NADH + O2 = (Z)-2-methylureidoacrylate + FMN + NAD(+) + H2O + H(+). In terms of biological role, catalyzes the pyrimidine ring opening between N-3 and C-4 by an unusual flavin hydroperoxide-catalyzed mechanism, adding oxygen atoms in the process to yield ureidoacrylate peracid, that immediately reacts with FMN forming ureidoacrylate and FMN-N(5)-oxide. The FMN-N(5)-oxide reacts spontaneously with NADH to produce FMN. Requires the flavin reductase RutF to regenerate FMN in vivo. This Escherichia coli O55:H7 (strain CB9615 / EPEC) protein is Pyrimidine monooxygenase RutA.